The following is a 228-amino-acid chain: UPF0758 protein RALTA_A2508 (228 aa).

In terms of domain architecture, MPN spans 102 to 224; sequence GFDSPDSVRS…IRSLAESCER (123 aa). Residues His173, His175, and Asp186 each coordinate Zn(2+). A JAMM motif motif is present at residues 173 to 186; sequence HNHPRGTTAPSQSD.

Belongs to the UPF0758 family.

The chain is UPF0758 protein RALTA_A2508 from Cupriavidus taiwanensis (strain DSM 17343 / BCRC 17206 / CCUG 44338 / CIP 107171 / LMG 19424 / R1) (Ralstonia taiwanensis (strain LMG 19424)).